The sequence spans 325 residues: MNMTKTAMLIALMTVMFMSIGYLLGGGGGMMIALVIAVAMNLFGYWNSDKMVLRMYNAQEVDERSAPEYYRMVSGLAANAGLPMPKVYIIHEDQPNAFATGRNPENAAVAATTGLLNRLSPEEVAGVMAHELAHVQNRDTLTMTIVATLAGAISMLGNFAFFLGGNRENGNGVMGVVGTLLAMIVAPFGAMIVQMAVSRTREYAADKRGAEICGNPLWLSSALGRIARGAKVIPNEEAEHNPATAHMFIINPLSGRGADNLFSTHPDTDNRIAALEQMAAEMGIRSAAMTARAAAPSQNSGPWGQRSDNAGGNSNGGSRYRGPWS.

Residues 20–40 traverse the membrane as a helical segment; that stretch reads IGYLLGGGGGMMIALVIAVAM. Zn(2+) is bound at residue His-130. Glu-131 is a catalytic residue. A Zn(2+)-binding site is contributed by His-134. Transmembrane regions (helical) follow at residues 145-165 and 173-193; these read IVAT…FLGG and VMGV…AMIV. Glu-202 lines the Zn(2+) pocket. Positions 288 to 325 are disordered; sequence AMTARAAAPSQNSGPWGQRSDNAGGNSNGGSRYRGPWS. Over residues 306 to 325 the composition is skewed to low complexity; that stretch reads RSDNAGGNSNGGSRYRGPWS.

It belongs to the peptidase M48B family. It depends on Zn(2+) as a cofactor.

It is found in the cell inner membrane. This Brucella abortus (strain S19) protein is Protease HtpX homolog.